A 264-amino-acid chain; its full sequence is 3-methyl-2-oxobutanoate hydroxymethyltransferase (264 aa).

Mg(2+)-binding residues include aspartate 45 and aspartate 84. Residues 45–46, aspartate 84, and lysine 112 contribute to the 3-methyl-2-oxobutanoate site; that span reads DS. Glutamate 114 is a binding site for Mg(2+). Catalysis depends on glutamate 181, which acts as the Proton acceptor.

The protein belongs to the PanB family. As to quaternary structure, homodecamer; pentamer of dimers. Requires Mg(2+) as cofactor.

Its subcellular location is the cytoplasm. It carries out the reaction 3-methyl-2-oxobutanoate + (6R)-5,10-methylene-5,6,7,8-tetrahydrofolate + H2O = 2-dehydropantoate + (6S)-5,6,7,8-tetrahydrofolate. It participates in cofactor biosynthesis; (R)-pantothenate biosynthesis; (R)-pantoate from 3-methyl-2-oxobutanoate: step 1/2. Its function is as follows. Catalyzes the reversible reaction in which hydroxymethyl group from 5,10-methylenetetrahydrofolate is transferred onto alpha-ketoisovalerate to form ketopantoate. The chain is 3-methyl-2-oxobutanoate hydroxymethyltransferase from Pectobacterium atrosepticum (strain SCRI 1043 / ATCC BAA-672) (Erwinia carotovora subsp. atroseptica).